The chain runs to 243 residues: 4-hydroxy-tetrahydrodipicolinate reductase (243 aa).

Residues 9 to 14 (GANGKM), 78 to 80 (GTS), and 104 to 107 (APNF) each bind NAD(+). The active-site Proton donor/acceptor is H134. H135 serves as a coordination point for (S)-2,3,4,5-tetrahydrodipicolinate. The active-site Proton donor is K138. 144–145 (GT) is a binding site for (S)-2,3,4,5-tetrahydrodipicolinate.

It belongs to the DapB family.

The protein localises to the cytoplasm. The catalysed reaction is (S)-2,3,4,5-tetrahydrodipicolinate + NAD(+) + H2O = (2S,4S)-4-hydroxy-2,3,4,5-tetrahydrodipicolinate + NADH + H(+). It carries out the reaction (S)-2,3,4,5-tetrahydrodipicolinate + NADP(+) + H2O = (2S,4S)-4-hydroxy-2,3,4,5-tetrahydrodipicolinate + NADPH + H(+). It functions in the pathway amino-acid biosynthesis; L-lysine biosynthesis via DAP pathway; (S)-tetrahydrodipicolinate from L-aspartate: step 4/4. Catalyzes the conversion of 4-hydroxy-tetrahydrodipicolinate (HTPA) to tetrahydrodipicolinate. The polypeptide is 4-hydroxy-tetrahydrodipicolinate reductase (Legionella pneumophila (strain Corby)).